Here is a 339-residue protein sequence, read N- to C-terminus: tRNA N6-adenosine threonylcarbamoyltransferase (339 aa).

Residues His111 and His115 each contribute to the Fe cation site. Substrate contacts are provided by residues 139–143 (LVSGG), Asp172, Gly185, Asp189, and Asn280. Asp308 contributes to the Fe cation binding site.

It belongs to the KAE1 / TsaD family. It depends on Fe(2+) as a cofactor.

The protein resides in the cytoplasm. It catalyses the reaction L-threonylcarbamoyladenylate + adenosine(37) in tRNA = N(6)-L-threonylcarbamoyladenosine(37) in tRNA + AMP + H(+). Required for the formation of a threonylcarbamoyl group on adenosine at position 37 (t(6)A37) in tRNAs that read codons beginning with adenine. Is involved in the transfer of the threonylcarbamoyl moiety of threonylcarbamoyl-AMP (TC-AMP) to the N6 group of A37, together with TsaE and TsaB. TsaD likely plays a direct catalytic role in this reaction. The protein is tRNA N6-adenosine threonylcarbamoyltransferase of Phocaeicola vulgatus (strain ATCC 8482 / DSM 1447 / JCM 5826 / CCUG 4940 / NBRC 14291 / NCTC 11154) (Bacteroides vulgatus).